Here is a 682-residue protein sequence, read N- to C-terminus: Homeobox-leucine zipper protein HDG7 (682 aa).

The interval 33 to 65 is disordered; sequence LSDDSFDAMSGDEDKQEQRPKKKKRKTKYHRHT. A compositionally biased stretch (basic residues) spans 52–65; sequence PKKKKRKTKYHRHT. Residues 57–116 constitute a DNA-binding region (homeobox); that stretch reads RKTKYHRHTSYQIQELESFFKECPHPNEKQRLELGKKLTLESKQIKFWFQNRRTQMKTQL. Residues 105–186 adopt a coiled-coil conformation; the sequence is FQNRRTQMKT…LDRICALANR (82 aa). Residues 214–429 enclose the START domain; it reads SGGTSLMFMD…LQRQCESFTM (216 aa).

It belongs to the HD-ZIP homeobox family. Class IV subfamily. Interacts with AIL7/PLT7. As to expression, expressed in cells around the base of leaf primordia, in the outermost 2 to 3 cell layers along the boundary between two leaf primordia. Expressed in lateral root primordia and tips, and in the epidermal boundaries of two cotyledons at heart-stage embryo.

The protein resides in the nucleus. Its function is as follows. Probable transcription factor that binds to the DNA sequence 5'-GCATTAAATGC-3'. Seems to promote cell differentiation. In Arabidopsis thaliana (Mouse-ear cress), this protein is Homeobox-leucine zipper protein HDG7.